Consider the following 190-residue polypeptide: MAGRLIYLIGPSGSGKDSLLDAARPRLAERGCRIVRRVITRSAEAVGEAAQGVSPEQFATMQAEGAFALSWQANGLSYGIPREIDDWLAAGDDVLVNGSRAHLAQTRERYPTLLVLLLTVDQAVLRQRLIARGREALADIEARLARNARFTADLIAGHGAGLFVLDNSGPLAHTVERLLCCLDHGHSACA.

10–17 (GPSGSGKD) lines the ATP pocket.

This sequence belongs to the ribose 1,5-bisphosphokinase family.

It catalyses the reaction alpha-D-ribose 1,5-bisphosphate + ATP = 5-phospho-alpha-D-ribose 1-diphosphate + ADP. It participates in metabolic intermediate biosynthesis; 5-phospho-alpha-D-ribose 1-diphosphate biosynthesis; 5-phospho-alpha-D-ribose 1-diphosphate from D-ribose 5-phosphate (route II): step 3/3. In terms of biological role, catalyzes the phosphorylation of ribose 1,5-bisphosphate to 5-phospho-D-ribosyl alpha-1-diphosphate (PRPP). The protein is Ribose 1,5-bisphosphate phosphokinase PhnN of Pseudomonas fluorescens (strain SBW25).